A 179-amino-acid polypeptide reads, in one-letter code: ATP-dependent protease subunit HslV (179 aa).

The active site involves Thr-7. Na(+)-binding residues include Gly-162, Cys-165, and Thr-168.

It belongs to the peptidase T1B family. HslV subfamily. A double ring-shaped homohexamer of HslV is capped on each side by a ring-shaped HslU homohexamer. The assembly of the HslU/HslV complex is dependent on binding of ATP.

Its subcellular location is the cytoplasm. It carries out the reaction ATP-dependent cleavage of peptide bonds with broad specificity.. With respect to regulation, allosterically activated by HslU binding. In terms of biological role, protease subunit of a proteasome-like degradation complex believed to be a general protein degrading machinery. This is ATP-dependent protease subunit HslV from Saccharophagus degradans (strain 2-40 / ATCC 43961 / DSM 17024).